Consider the following 333-residue polypeptide: Phosphate acyltransferase (333 aa).

It belongs to the PlsX family. As to quaternary structure, homodimer. Probably interacts with PlsY.

It localises to the cytoplasm. It carries out the reaction a fatty acyl-[ACP] + phosphate = an acyl phosphate + holo-[ACP]. The protein operates within lipid metabolism; phospholipid metabolism. Catalyzes the reversible formation of acyl-phosphate (acyl-PO(4)) from acyl-[acyl-carrier-protein] (acyl-ACP). This enzyme utilizes acyl-ACP as fatty acyl donor, but not acyl-CoA. The chain is Phosphate acyltransferase from Aliarcobacter butzleri (strain RM4018) (Arcobacter butzleri).